The following is a 131-amino-acid chain: Small ribosomal subunit protein uS8 (131 aa).

This sequence belongs to the universal ribosomal protein uS8 family. In terms of assembly, part of the 30S ribosomal subunit. Contacts proteins S5 and S12.

One of the primary rRNA binding proteins, it binds directly to 16S rRNA central domain where it helps coordinate assembly of the platform of the 30S subunit. This is Small ribosomal subunit protein uS8 from Bordetella parapertussis (strain 12822 / ATCC BAA-587 / NCTC 13253).